Consider the following 443-residue polypeptide: Thymidine phosphorylase (443 aa).

Belongs to the thymidine/pyrimidine-nucleoside phosphorylase family. Homodimer.

It catalyses the reaction thymidine + phosphate = 2-deoxy-alpha-D-ribose 1-phosphate + thymine. The protein operates within pyrimidine metabolism; dTMP biosynthesis via salvage pathway; dTMP from thymine: step 1/2. The enzymes which catalyze the reversible phosphorolysis of pyrimidine nucleosides are involved in the degradation of these compounds and in their utilization as carbon and energy sources, or in the rescue of pyrimidine bases for nucleotide synthesis. In Shewanella baltica (strain OS195), this protein is Thymidine phosphorylase.